A 275-amino-acid polypeptide reads, in one-letter code: Lacto-N-neotetraose biosynthesis glycosyltransferase LgtB (275 aa).

This sequence belongs to the glycosyltransferase 25 family.

It functions in the pathway glycan metabolism; lacto-N-neotetraose biosynthesis. The protein operates within bacterial outer membrane biogenesis; lipooligosaccharide biosynthesis. Its function is as follows. Adds the second galactose to the lacto-N-tetraose chain in lipooligosaccharide (LOS). The protein is Lacto-N-neotetraose biosynthesis glycosyltransferase LgtB (lgtB) of Neisseria meningitidis serogroup B (strain ATCC BAA-335 / MC58).